The chain runs to 217 residues: Somatotropin (217 aa).

The signal sequence occupies residues 1-27 (MMAAGPRTSLLLAFTLLCLPWTQVVGA). His46 lines the Zn(2+) pocket. Cys79 and Cys190 are disulfide-bonded. Position 132 is a phosphoserine (Ser132). A Zn(2+)-binding site is contributed by Glu199. Cys207 and Cys215 form a disulfide bridge.

It belongs to the somatotropin/prolactin family.

It is found in the secreted. Functionally, plays an important role in growth control. Its major role in stimulating body growth is to stimulate the liver and other tissues to secrete IGF1. It stimulates both the differentiation and proliferation of myoblasts. It also stimulates amino acid uptake and protein synthesis in muscle and other tissues. The chain is Somatotropin (GH1) from Capra hircus (Goat).